Here is a 350-residue protein sequence, read N- to C-terminus: MLAPSQVSLADLPRLHKGDRPQAEFKQTPEDFQVIEQLDVIDDGEGEHQWLWVRKTGANTNFCAEKIARFAGVSERNVSYSGLKDRQAVTWQWFSIQLPGKETLNWNELNDEEMSVERIIRRTKKLKTGFHRANRFVIRLANVSSREALENLWQGVSEQGVINYFGEQRFGRSGDNVAQAERWLMASRPPRISRSKRSLYLSALRSYLFNEIVAERIRQFGIEGTLTGDCVMLEGSQSVFTVEQWDDELKQRLANNNIYLTAPLAGSTNKPLVKGEADAFEQSLLQPFDSWLQALRKLRVEAARRTILLRVENPEISWQGKDAELRFTLPSGAYATTVLNEIVDLSGESR.

Aspartate 85 acts as the Nucleophile in catalysis. One can recognise a TRUD domain in the interval 160–310; the sequence is GVINYFGEQR…EAARRTILLR (151 aa).

Belongs to the pseudouridine synthase TruD family.

The enzyme catalyses uridine(13) in tRNA = pseudouridine(13) in tRNA. Its function is as follows. Responsible for synthesis of pseudouridine from uracil-13 in transfer RNAs. In Idiomarina loihiensis (strain ATCC BAA-735 / DSM 15497 / L2-TR), this protein is tRNA pseudouridine synthase D.